The primary structure comprises 185 residues: Ribosome-recycling factor (185 aa).

It belongs to the RRF family.

It is found in the cytoplasm. Responsible for the release of ribosomes from messenger RNA at the termination of protein biosynthesis. May increase the efficiency of translation by recycling ribosomes from one round of translation to another. The sequence is that of Ribosome-recycling factor from Enterococcus faecalis (strain ATCC 700802 / V583).